The sequence spans 216 residues: Lipoprotein signal peptidase (216 aa).

Residues 1-21 (MATSRTAPTRAPSLRSSPALE) form a disordered region. Transmembrane regions (helical) follow at residues 31-51 (VGAL…DQIT), 89-109 (GSTW…IWYA), and 114-134 (STAW…NLTD). Active-site residues include aspartate 149 and aspartate 164. Residues 159-179 (IFNLADVAIVFSMGLFLLLTL) traverse the membrane as a helical segment. Residues 189–216 (QRDEGAGVSSASPAGDESAADKPENLSA) are disordered. The segment covering 207-216 (AADKPENLSA) has biased composition (basic and acidic residues).

This sequence belongs to the peptidase A8 family.

It localises to the cell membrane. It catalyses the reaction Release of signal peptides from bacterial membrane prolipoproteins. Hydrolyzes -Xaa-Yaa-Zaa-|-(S,diacylglyceryl)Cys-, in which Xaa is hydrophobic (preferably Leu), and Yaa (Ala or Ser) and Zaa (Gly or Ala) have small, neutral side chains.. Its pathway is protein modification; lipoprotein biosynthesis (signal peptide cleavage). Functionally, this protein specifically catalyzes the removal of signal peptides from prolipoproteins. This is Lipoprotein signal peptidase from Leifsonia xyli subsp. xyli (strain CTCB07).